Reading from the N-terminus, the 336-residue chain is Flagellar filament 41 kDa core protein (336 aa).

Residues 208–236 form a disordered region; it reads AAPVQEGVQQEGAQQPAPATAPSQGGVNS. Low complexity predominate over residues 210-233; sequence PVQEGVQQEGAQQPAPATAPSQGG.

This sequence belongs to the bacterial flagellin family. In terms of assembly, the flagellum consists of an outer layer composed of repeating units of FlaA around a core that contains several antigenically related polypeptides.

It is found in the periplasmic flagellum. The protein localises to the periplasm. In terms of biological role, component of the core of the flagella. The protein is Flagellar filament 41 kDa core protein (fla) of Borreliella burgdorferi (strain ATCC 35210 / DSM 4680 / CIP 102532 / B31) (Borrelia burgdorferi).